The following is a 406-amino-acid chain: Synaptic vesicle membrane protein VAT-1 homolog (406 aa).

Residues Met-1 to Ser-57 are disordered. An N-acetylserine modification is found at Ser-2. Residue Ser-2 is modified to Phosphoserine. Positions Glu-9–Glu-22 are enriched in low complexity. Phosphoserine occurs at positions 33 and 42.

It belongs to the zinc-containing alcohol dehydrogenase family. Quinone oxidoreductase subfamily.

Its subcellular location is the cytoplasm. It is found in the mitochondrion outer membrane. Plays a part in calcium-regulated keratinocyte activation in epidermal repair mechanisms. Has no effect on cell proliferation. Possesses ATPase activity. Negatively regulates mitochondrial fusion in cooperation with mitofusin proteins (MFN1-2). The protein is Synaptic vesicle membrane protein VAT-1 homolog (Vat1) of Mus musculus (Mouse).